The following is a 104-amino-acid chain: Large ribosomal subunit protein bL21 (104 aa).

Belongs to the bacterial ribosomal protein bL21 family. As to quaternary structure, part of the 50S ribosomal subunit. Contacts protein L20.

Its function is as follows. This protein binds to 23S rRNA in the presence of protein L20. The polypeptide is Large ribosomal subunit protein bL21 (Kosmotoga olearia (strain ATCC BAA-1733 / DSM 21960 / TBF 19.5.1)).